Here is a 181-residue protein sequence, read N- to C-terminus: Large ribosomal subunit protein uL5 (181 aa).

It belongs to the universal ribosomal protein uL5 family. In terms of assembly, part of the 50S ribosomal subunit; part of the 5S rRNA/L5/L18/L25 subcomplex. Contacts the 5S rRNA and the P site tRNA. Forms a bridge to the 30S subunit in the 70S ribosome.

In terms of biological role, this is one of the proteins that bind and probably mediate the attachment of the 5S RNA into the large ribosomal subunit, where it forms part of the central protuberance. In the 70S ribosome it contacts protein S13 of the 30S subunit (bridge B1b), connecting the 2 subunits; this bridge is implicated in subunit movement. Contacts the P site tRNA; the 5S rRNA and some of its associated proteins might help stabilize positioning of ribosome-bound tRNAs. The polypeptide is Large ribosomal subunit protein uL5 (Helicobacter pylori (strain J99 / ATCC 700824) (Campylobacter pylori J99)).